A 195-amino-acid polypeptide reads, in one-letter code: NADH-quinone oxidoreductase subunit C (195 aa).

The protein belongs to the complex I 30 kDa subunit family. In terms of assembly, NDH-1 is composed of 14 different subunits. Subunits NuoB, C, D, E, F, and G constitute the peripheral sector of the complex.

It is found in the cell inner membrane. The catalysed reaction is a quinone + NADH + 5 H(+)(in) = a quinol + NAD(+) + 4 H(+)(out). Functionally, NDH-1 shuttles electrons from NADH, via FMN and iron-sulfur (Fe-S) centers, to quinones in the respiratory chain. The immediate electron acceptor for the enzyme in this species is believed to be ubiquinone. Couples the redox reaction to proton translocation (for every two electrons transferred, four hydrogen ions are translocated across the cytoplasmic membrane), and thus conserves the redox energy in a proton gradient. The sequence is that of NADH-quinone oxidoreductase subunit C from Laribacter hongkongensis (strain HLHK9).